The sequence spans 761 residues: Neutral ceramidase (761 aa).

At 1–11 the chain is on the cytoplasmic side; that stretch reads MAKRTFSSLEA. Residues 12–32 form a helical; Signal-anchor for type II membrane protein membrane-spanning segment; the sequence is FLIFLLVMMTAITVALLTLLF. Topologically, residues 33–761 are lumenal; that stretch reads VTSGTIENHK…ISSPFEIVTT (729 aa). The interval 43–76 is disordered; the sequence is DSGNHWVSTTQGPTTTQSSPTTQTPTTQTPDLPP. Low complexity predominate over residues 50–76; that stretch reads STTQGPTTTQSSPTTQTPTTQTPDLPP. 5 O-linked (GalNAc...) threonine glycosylation sites follow: Thr51, Thr52, Thr56, Thr57, and Thr58. Ser60 and Ser61 each carry an O-linked (GalNAc...) serine glycan. 6 O-linked (GalNAc...) threonine glycosylation sites follow: Thr63, Thr64, Thr66, Thr68, Thr69, and Thr71. Residue Leu115 coordinates Ca(2+). His175 provides a ligand contact to Zn(2+). N-linked (GlcNAc...) asparagine glycosylation occurs at Asn198. His284 lines the Zn(2+) pocket. Ser335 acts as the Nucleophile in catalysis. Cystine bridges form between Cys343/Cys357 and Cys350/Cys365. Residues Asn412 and Asn449 are each glycosylated (N-linked (GlcNAc...) asparagine). A disulfide bridge links Cys429 with Cys479. Zn(2+) is bound by residues Glu521 and Tyr560. The Ca(2+) site is built by Asp693, Ser695, and Thr698. The segment at 751–761 is required for correct folding and localization; that stretch reads GISSPFEIVTT.

Belongs to the neutral ceramidase family. Zn(2+) is required as a cofactor. Post-translationally, proteolytic cleavage of the N-terminus removes the signal-anchor and produces a soluble form of the protein. N-glycosylated. Required for enzyme activity. In terms of processing, O-glycosylated. Required to retain it as a type II membrane protein at the cell surface. Post-translationally, phosphorylated. May prevent ubiquitination and subsequent degradation. Ubiquitinated, leading to its degradation by the proteasome. Ubiquitination is triggered by nitric oxide. As to expression, highly expressed in brain, kidney and heart. Expressed at lower level in other tissues such as liver. Expressed in intestine, kidney and liver (at protein level). Localizes in the epithelia of the jejunum and ileum.

Its subcellular location is the cell membrane. It localises to the membrane raft. The protein resides in the membrane. It is found in the caveola. The protein localises to the golgi apparatus membrane. Its subcellular location is the mitochondrion. It localises to the secreted. The protein resides in the extracellular exosome. The enzyme catalyses an N-acylsphing-4-enine + H2O = sphing-4-enine + a fatty acid. The catalysed reaction is N-hexadecanoylsphing-4-enine + H2O = sphing-4-enine + hexadecanoate. It catalyses the reaction N-tetradecanoylsphing-4-enine + H2O = tetradecanoate + sphing-4-enine. It carries out the reaction N-(9Z-octadecenoyl)-sphing-4-enine + H2O = sphing-4-enine + (9Z)-octadecenoate. The enzyme catalyses N-(15Z-tetracosenoyl)-sphing-4-enine + H2O = (15Z)-tetracosenoate + sphing-4-enine. The catalysed reaction is N-octanoylsphing-4-enine + H2O = octanoate + sphing-4-enine. It catalyses the reaction N-dodecanoylsphing-4-enine + H2O = dodecanoate + sphing-4-enine. It carries out the reaction N-(hexanoyl)sphing-4-enine + H2O = hexanoate + sphing-4-enine. The enzyme catalyses N-octadecanoylsphing-4-enine + H2O = sphing-4-enine + octadecanoate. The catalysed reaction is sphinganine + hexadecanoate = N-hexadecanoylsphinganine + H2O. It catalyses the reaction N-(octadecanoyl)-sphinganine + H2O = sphinganine + octadecanoate. It functions in the pathway lipid metabolism; sphingolipid metabolism. The reverse reaction is inhibited by Zn(2+) and Cu(2+). Inhibited by cardiolipin and phosphatidic acid. Functionally, plasma membrane ceramidase that hydrolyzes sphingolipid ceramides into sphingosine and free fatty acids at neutral pH. Ceramides, sphingosine, and its phosphorylated form sphingosine-1-phosphate are bioactive lipids that mediate cellular signaling pathways regulating several biological processes including cell proliferation, apoptosis and differentiation. Also catalyzes the reverse reaction allowing the synthesis of ceramides from fatty acids and sphingosine. Together with sphingomyelinase, participates in the production of sphingosine and sphingosine-1-phosphate from the degradation of sphingomyelin, a sphingolipid enriched in the plasma membrane of cells. Also participates in the hydrolysis of ceramides from the extracellular milieu allowing the production of sphingosine-1-phosphate inside and outside cells. This is the case for instance with the digestion of dietary sphingolipids in the intestinal tract. This is Neutral ceramidase (Asah2) from Rattus norvegicus (Rat).